Consider the following 354-residue polypeptide: DNA integrity scanning protein DisA (354 aa).

A DAC domain is found at 6 to 144 (DDELKKILKI…GDIKYVLRDS (139 aa)). ATP is bound by residues Gly73, Leu91, and 104–108 (TRHRT).

This sequence belongs to the DisA family. In terms of assembly, homooctamer. Mg(2+) is required as a cofactor.

The catalysed reaction is 2 ATP = 3',3'-c-di-AMP + 2 diphosphate. Its function is as follows. Participates in a DNA-damage check-point that is active prior to asymmetric division when DNA is damaged. DisA forms globular foci that rapidly scan along the chromosomes during sporulation, searching for lesions. When a lesion is present, DisA pauses at the lesion site. This triggers a cellular response that culminates in a temporary block in sporulation initiation. In terms of biological role, also has diadenylate cyclase activity, catalyzing the condensation of 2 ATP molecules into cyclic di-AMP (c-di-AMP). c-di-AMP acts as a signaling molecule that couples DNA integrity with progression of sporulation. The rise in c-di-AMP level generated by DisA while scanning the chromosome, operates as a positive signal that advances sporulation; upon encountering a lesion, the DisA focus arrests at the damaged site and halts c-di-AMP synthesis. The polypeptide is DNA integrity scanning protein DisA (Clostridium perfringens (strain 13 / Type A)).